Here is a 348-residue protein sequence, read N- to C-terminus: MVKSQLILGIESSCDETGVALVRAPADGSVPTLLAHALHSQIDMHQAYGGVVPELASRDHIRRVLPLTGTVLAEADCRLAEVDVVAYTRGPGLAGALLVGAGVACALGASLDRPVLGVHHLEGHLLSPFLSADPPEFPFVALLVSGGHTQLMRVDGVGRYELLGETIDDAAGEAFDKSAKLLGLGYPGGPALSRLAEQGDAAAFKLPRPLLHSGNLDFSFAGLKTAVLTQAKKLGDELPARKADLAASTQAAIVDVLVKKTLAALQASGLRRVVVAGGVGANRLLRAQLDAACARMGVRVHYPELHLCTDNGAMIAMAAAMRLQAGREAPNREYAFDVKPRWPLDALA.

The Fe cation site is built by His-120 and His-124. Residues 143–147 (LVSGG), Asp-176, Gly-189, and Asn-282 each bind substrate. Asp-310 is a Fe cation binding site.

Belongs to the KAE1 / TsaD family. The cofactor is Fe(2+).

It localises to the cytoplasm. The enzyme catalyses L-threonylcarbamoyladenylate + adenosine(37) in tRNA = N(6)-L-threonylcarbamoyladenosine(37) in tRNA + AMP + H(+). In terms of biological role, required for the formation of a threonylcarbamoyl group on adenosine at position 37 (t(6)A37) in tRNAs that read codons beginning with adenine. Is involved in the transfer of the threonylcarbamoyl moiety of threonylcarbamoyl-AMP (TC-AMP) to the N6 group of A37, together with TsaE and TsaB. TsaD likely plays a direct catalytic role in this reaction. This is tRNA N6-adenosine threonylcarbamoyltransferase from Paracidovorax citrulli (strain AAC00-1) (Acidovorax citrulli).